Reading from the N-terminus, the 207-residue chain is Urease accessory protein UreG (207 aa).

14 to 21 contacts GTP; it reads GPVGSGKT.

Belongs to the SIMIBI class G3E GTPase family. UreG subfamily. Homodimer. UreD, UreF and UreG form a complex that acts as a GTP-hydrolysis-dependent molecular chaperone, activating the urease apoprotein by helping to assemble the nickel containing metallocenter of UreC. The UreE protein probably delivers the nickel.

The protein resides in the cytoplasm. Functionally, facilitates the functional incorporation of the urease nickel metallocenter. This process requires GTP hydrolysis, probably effectuated by UreG. The chain is Urease accessory protein UreG from Chelativorans sp. (strain BNC1).